The chain runs to 694 residues: Frizzled-8 (694 aa).

A signal peptide spans 1 to 27 (MEWGYLLEVTSLLAALALLQRSSGAAA). The Extracellular portion of the chain corresponds to 28 to 275 (ASAKELACQE…NPFFSQDERA (248 aa)). In terms of domain architecture, FZ spans 30–151 (AKELACQEIT…GNPDTLCMDY (122 aa)). Disulfide bonds link C35-C96, C43-C89, C80-C118, C107-C148, and C111-C135. N-linked (GlcNAc...) asparagine glycosylation is present at N49. Residue 71 to 78 (QFWPLVEI) participates in hexadecanoate binding. A wnt-binding region spans residues 95–100 (ICLEDY). The wnt-binding stretch occupies residues 147-152 (LCMDYN). N152 carries an N-linked (GlcNAc...) asparagine glycan. The tract at residues 155–226 (DLTTAAPSPP…KARPPGGGAA (72 aa)) is disordered. Pro residues predominate over residues 161–175 (PSPPRRLPPPPPGEQ). Residues 176–186 (PPSGSGHGRPP) are compositionally biased toward low complexity. The segment covering 210–225 (RGGGGGGKARPPGGGA) has biased composition (gly residues). Residues 276–296 (FTVFWIGLWSVLCFVSTFATV) form a helical membrane-spanning segment. Topologically, residues 297 to 312 (STFLIDMERFKYPERP) are cytoplasmic. A helical membrane pass occupies residues 313–333 (IIFLSACYLFVSVGYLVRLVA). The Extracellular portion of the chain corresponds to 334–396 (GHEKVACSGG…RYETTGPALC (63 aa)). The helical transmembrane segment at 397 to 417 (TVVFLLVYFFGMASSIWWVIL) threads the bilayer. Topologically, residues 418–439 (SLTWFLAAGMKWGNEAIAGYSQ) are cytoplasmic. The helical transmembrane segment at 440-460 (YFHLAAWLVPSVKSIAVLALS) threads the bilayer. Topologically, residues 461 to 483 (SVDGDPVAGICYVGNQSLDNLRG) are extracellular. Residue N475 is glycosylated (N-linked (GlcNAc...) asparagine). The chain crosses the membrane as a helical span at residues 484-504 (FVLAPLVIYLFIGTMFLLAGF). At 505–532 (VSLFRIRSVIKQQDGPTKTHKLEKLMIR) the chain is on the cytoplasmic side. The helical transmembrane segment at 533–553 (LGLFTVLYTVPAAVVVACLFY) threads the bilayer. Topologically, residues 554 to 584 (EQHNRPRWEATHNCPCLRDLQPDQARRPDYA) are extracellular. Residues 585-605 (VFMLKYFMCLVVGITSGVWVW) traverse the membrane as a helical segment. Residues 606 to 694 (SGKTLESWRS…YPKQMPLSQV (89 aa)) are Cytoplasmic-facing. The Lys-Thr-X-X-X-Trp motif, mediates interaction with the PDZ domain of Dvl family members motif lies at 608–613 (KTLESW). A compositionally biased stretch (gly residues) spans 648–664 (GGGGPGGGGGPGGGGGS). The tract at residues 648 to 668 (GGGGPGGGGGPGGGGGSLYSD) is disordered. The PDZ-binding signature appears at 692–694 (SQV).

The protein belongs to the G-protein coupled receptor Fz/Smo family. Component of a Wnt-signaling complex that contains a WNT protein, a FZD protein and LRP5 or LRP6. Interacts directly with LRP5 or LRP6; the interaction is promoted by Wnt-binding and signaling and inhibited by DKK1. Interacts with GPOC, RSPO1 and RSPO3. Interacts with glypican GPC3. Post-translationally, ubiquitinated by ZNRF3, leading to its degradation by the proteasome. In terms of tissue distribution, most abundant in fetal kidney, followed by brain and lung. In adult tissues, expressed in kidney, heart, pancreas and skeletal muscle.

The protein localises to the membrane. The protein resides in the golgi apparatus. Its subcellular location is the cell membrane. In terms of biological role, receptor for Wnt proteins. Component of the Wnt-Fzd-LRP5-LRP6 complex that triggers beta-catenin signaling through inducing aggregation of receptor-ligand complexes into ribosome-sized signalosomes. The beta-catenin canonical signaling pathway leads to the activation of disheveled proteins, inhibition of GSK-3 kinase, nuclear accumulation of beta-catenin and activation of Wnt target genes. A second signaling pathway involving PKC and calcium fluxes has been seen for some family members, but it is not yet clear if it represents a distinct pathway or if it can be integrated in the canonical pathway, as PKC seems to be required for Wnt-mediated inactivation of GSK-3 kinase. Both pathways seem to involve interactions with G-proteins. May be involved in transduction and intercellular transmission of polarity information during tissue morphogenesis and/or in differentiated tissues. Coreceptor along with RYK of Wnt proteins, such as WNT1. The chain is Frizzled-8 (FZD8) from Homo sapiens (Human).